Here is a 249-residue protein sequence, read N- to C-terminus: Enolase-phosphatase E1 (249 aa).

This sequence belongs to the HAD-like hydrolase superfamily. MasA/MtnC family. Monomer. It depends on Mg(2+) as a cofactor.

It carries out the reaction 5-methylsulfanyl-2,3-dioxopentyl phosphate + H2O = 1,2-dihydroxy-5-(methylsulfanyl)pent-1-en-3-one + phosphate. The protein operates within amino-acid biosynthesis; L-methionine biosynthesis via salvage pathway; L-methionine from S-methyl-5-thio-alpha-D-ribose 1-phosphate: step 3/6. It functions in the pathway amino-acid biosynthesis; L-methionine biosynthesis via salvage pathway; L-methionine from S-methyl-5-thio-alpha-D-ribose 1-phosphate: step 4/6. Bifunctional enzyme that catalyzes the enolization of 2,3-diketo-5-methylthiopentyl-1-phosphate (DK-MTP-1-P) into the intermediate 2-hydroxy-3-keto-5-methylthiopentenyl-1-phosphate (HK-MTPenyl-1-P), which is then dephosphorylated to form the acireductone 1,2-dihydroxy-3-keto-5-methylthiopentene (DHK-MTPene). This is Enolase-phosphatase E1 from Pseudomonas aeruginosa (strain ATCC 15692 / DSM 22644 / CIP 104116 / JCM 14847 / LMG 12228 / 1C / PRS 101 / PAO1).